We begin with the raw amino-acid sequence, 1000 residues long: C2 domain-containing protein 5 (1000 aa).

The C2 domain occupies 1–109; it reads MPGKLKVKIV…EAATVISGWF (109 aa). D19, D26, D76, D78, S81, and D84 together coordinate Ca(2+). S197 carries the post-translational modification Phosphoserine; by PKB/AKT2. A phosphoserine mark is found at S200 and S260. The disordered stretch occupies residues 265–330; it reads MKEIPFNEDP…SGSAGKEGGP (66 aa). Polar residues predominate over residues 274 to 289; it reads PNPNTHSSGPSTPLKN. The span at 290–318 shows a compositional bias: low complexity; sequence QTYSFSPSKSYSRQSSSSDTDLSLTPKTG. S293, S295, S304, S305, and S306 each carry phosphoserine. T317 carries the phosphothreonine modification. The segment covering 319 to 328 has biased composition (gly residues); the sequence is MGSGSAGKEG. S323 bears the Phosphoserine mark. T601 is subject to Phosphothreonine. The tract at residues 639 to 669 is disordered; that stretch reads EIIGSPIPEPRQRSRLLRSQSESSDEVTELD. 5 positions are modified to phosphoserine: S643, S657, S659, S661, and S662. T666 carries the post-translational modification Phosphothreonine. S671 bears the Phosphoserine mark. At T807 the chain carries Phosphothreonine. Residues S817 and S852 each carry the phosphoserine modification.

Requires Ca(2+) as cofactor. In terms of processing, phosphorylated on Ser-197 by active myristoylated kinase AKT2; insulin-stimulated phosphorylation by AKT2 regulates SLC2A4/GLUT4 translocation into the plasma membrane.

It is found in the cytoplasmic vesicle membrane. The protein localises to the cytoplasm. Its subcellular location is the cell cortex. It localises to the cell membrane. The protein resides in the cell projection. It is found in the ruffle. Functionally, required for insulin-stimulated glucose transport and glucose transporter SLC2A4/GLUT4 translocation from intracellular glucose storage vesicle (GSV) to the plasma membrane (PM) in adipocytes. Binds phospholipid membranes in a calcium-dependent manner and is necessary for the optimal membrane fusion between SLC2A4/GLUT4 GSV and the PM. This is C2 domain-containing protein 5 (C2CD5) from Homo sapiens (Human).